Consider the following 736-residue polypeptide: Factor of DNA methylation 4 (736 aa).

Basic and acidic residues-rich tracts occupy residues 80-90 (RKYLRPRERPR) and 144-167 (DSGR…SNED). A disordered region spans residues 80-167 (RKYLRPRERP…KPDPFFSNED (88 aa)). Residues 360-597 (TLVSNLENTL…RSMRELTTRA (238 aa)) adopt a coiled-coil conformation.

Functionally, acts in association with FDM3 and FDM5 for RNA-directed DNA methylation (RdDM). This Arabidopsis thaliana (Mouse-ear cress) protein is Factor of DNA methylation 4.